The following is a 60-amino-acid chain: Large ribosomal subunit protein uL30 (60 aa).

Belongs to the universal ribosomal protein uL30 family. Part of the 50S ribosomal subunit.

The chain is Large ribosomal subunit protein uL30 from Desulforapulum autotrophicum (strain ATCC 43914 / DSM 3382 / VKM B-1955 / HRM2) (Desulfobacterium autotrophicum).